Reading from the N-terminus, the 235-residue chain is Serine protease SplA (235 aa).

A signal peptide spans 1–35; sequence MNKNVMVKGLTALTILTSLGFAENISNQPHSIAKA. Residues H74, D113, and S189 each act as charge relay system in the active site.

The protein belongs to the peptidase S1B family.

It is found in the secreted. This is Serine protease SplA (splA) from Staphylococcus aureus (strain Mu3 / ATCC 700698).